The sequence spans 200 residues: 7-methyl-GTP pyrophosphatase (200 aa).

Aspartate 69 functions as the Proton acceptor in the catalytic mechanism.

This sequence belongs to the Maf family. YceF subfamily. It depends on a divalent metal cation as a cofactor.

It is found in the cytoplasm. It catalyses the reaction N(7)-methyl-GTP + H2O = N(7)-methyl-GMP + diphosphate + H(+). Functionally, nucleoside triphosphate pyrophosphatase that hydrolyzes 7-methyl-GTP (m(7)GTP). May have a dual role in cell division arrest and in preventing the incorporation of modified nucleotides into cellular nucleic acids. This chain is 7-methyl-GTP pyrophosphatase, found in Colwellia psychrerythraea (strain 34H / ATCC BAA-681) (Vibrio psychroerythus).